A 434-amino-acid chain; its full sequence is Probable phosphoglucosamine mutase (434 aa).

S91 (phosphoserine intermediate) is an active-site residue. 4 residues coordinate Mg(2+): S91, D229, D231, and D233. The residue at position 91 (S91) is a Phosphoserine.

Belongs to the phosphohexose mutase family. It depends on Mg(2+) as a cofactor. Activated by phosphorylation.

The enzyme catalyses alpha-D-glucosamine 1-phosphate = D-glucosamine 6-phosphate. Functionally, catalyzes the conversion of glucosamine-6-phosphate to glucosamine-1-phosphate. The protein is Probable phosphoglucosamine mutase of Methanosarcina acetivorans (strain ATCC 35395 / DSM 2834 / JCM 12185 / C2A).